A 95-amino-acid polypeptide reads, in one-letter code: Protein TusB (95 aa).

It belongs to the DsrH/TusB family. In terms of assembly, heterohexamer, formed by a dimer of trimers. The hexameric TusBCD complex contains 2 copies each of TusB, TusC and TusD. The TusBCD complex interacts with TusE.

Its subcellular location is the cytoplasm. Part of a sulfur-relay system required for 2-thiolation of 5-methylaminomethyl-2-thiouridine (mnm(5)s(2)U) at tRNA wobble positions. The polypeptide is Protein TusB (Salmonella dublin (strain CT_02021853)).